A 323-amino-acid polypeptide reads, in one-letter code: Breast cancer metastasis-suppressor 1-like protein-A (323 aa).

A compositionally biased stretch (basic and acidic residues) spans 1–15 (MPVHSREKKESNHEE). Residues 1-52 (MPVHSREKKESNHEEMEVDFAEQEGSSSEDEDTESSSVSEDGESSEMDDEDC) are disordered. Over residues 16–51 (MEVDFAEQEGSSSEDEDTESSSVSEDGESSEMDDED) the composition is skewed to acidic residues. 2 coiled-coil regions span residues 50 to 81 (EDCE…YKER) and 156 to 178 (QTEL…ITSE).

This sequence belongs to the BRMS1 family.

It localises to the nucleus. Functionally, involved in the histone deacetylase (HDAC1)-dependent transcriptional repression activity. This chain is Breast cancer metastasis-suppressor 1-like protein-A (brms1la), found in Danio rerio (Zebrafish).